Here is a 1031-residue protein sequence, read N- to C-terminus: Error-prone DNA polymerase (1031 aa).

Belongs to the DNA polymerase type-C family. DnaE2 subfamily.

It is found in the cytoplasm. The enzyme catalyses DNA(n) + a 2'-deoxyribonucleoside 5'-triphosphate = DNA(n+1) + diphosphate. Functionally, DNA polymerase involved in damage-induced mutagenesis and translesion synthesis (TLS). It is not the major replicative DNA polymerase. This is Error-prone DNA polymerase from Pseudomonas savastanoi pv. phaseolicola (strain 1448A / Race 6) (Pseudomonas syringae pv. phaseolicola (strain 1448A / Race 6)).